A 126-amino-acid chain; its full sequence is UPF0538 protein C2orf76 (126 aa).

It belongs to the UPF0538 family.

This is UPF0538 protein C2orf76 (C2orf76) from Homo sapiens (Human).